A 226-amino-acid chain; its full sequence is Deoxyribose-phosphate aldolase (226 aa).

Catalysis depends on D94, which acts as the Proton donor/acceptor. The active-site Schiff-base intermediate with acetaldehyde is K156. Catalysis depends on K185, which acts as the Proton donor/acceptor.

This sequence belongs to the DeoC/FbaB aldolase family. DeoC type 1 subfamily.

The protein resides in the cytoplasm. It catalyses the reaction 2-deoxy-D-ribose 5-phosphate = D-glyceraldehyde 3-phosphate + acetaldehyde. The protein operates within carbohydrate degradation; 2-deoxy-D-ribose 1-phosphate degradation; D-glyceraldehyde 3-phosphate and acetaldehyde from 2-deoxy-alpha-D-ribose 1-phosphate: step 2/2. Functionally, catalyzes a reversible aldol reaction between acetaldehyde and D-glyceraldehyde 3-phosphate to generate 2-deoxy-D-ribose 5-phosphate. This Burkholderia lata (strain ATCC 17760 / DSM 23089 / LMG 22485 / NCIMB 9086 / R18194 / 383) protein is Deoxyribose-phosphate aldolase.